Consider the following 357-residue polypeptide: Probable glutamine amidotransferase DUG3 (357 aa).

C2 serves as the catalytic For GATase activity. Positions 2-260 constitute a Glutamine amidotransferase type-2 domain; sequence CRFLIFKGKQ…PGEYRVERLD (259 aa).

The protein belongs to the DUG3 family. Component of the GSH degradosomal complex composed of at least DUG1, DUG2 and DUG3.

The protein resides in the cytoplasm. Component of the GSH degradosomal complex involved in the degradation of glutathione (GSH) and other peptides containing a gamma-glu-X bond. This chain is Probable glutamine amidotransferase DUG3 (DUG3), found in Saccharomyces cerevisiae (strain ATCC 204508 / S288c) (Baker's yeast).